Consider the following 97-residue polypeptide: Putative pterin-4-alpha-carbinolamine dehydratase (97 aa).

Belongs to the pterin-4-alpha-carbinolamine dehydratase family.

It catalyses the reaction (4aS,6R)-4a-hydroxy-L-erythro-5,6,7,8-tetrahydrobiopterin = (6R)-L-erythro-6,7-dihydrobiopterin + H2O. The polypeptide is Putative pterin-4-alpha-carbinolamine dehydratase (Cyanothece sp. (strain PCC 7425 / ATCC 29141)).